We begin with the raw amino-acid sequence, 135 residues long: uncharacterized protein (135 aa).

Residues 8-123 enclose the HotDog ACOT-type domain; that stretch reads PKGKMVLRTL…IFVYVAVDEF (116 aa).

Belongs to the acyl coenzyme A hydrolase family.

This is an uncharacterized protein from Buchnera aphidicola subsp. Baizongia pistaciae (strain Bp).